Consider the following 340-residue polypeptide: MKQEVHRIQEETLAELQQVSTLEALQELKVKVLGKKGSLTAQLRKMGGLSPEERPIFGQVVNETRDILEAAWVRREEELSQAAMLKQLEEEKLDISLPGVSLPRGHQHPLTKVIEEIEEIFLGMGFQIAEGPEIESDYYNFEALNLPKDHPAREMQDSFYITEEILLRTQTSPVQIRTMEKQRPQLPVKIICPGKVYRNDDDATHSPMFHQVEGLMVDRGIRMSDLKGILLSFSRMMFGESREIRLRPSFFPFTEPSAEVDVSCMLCGGAGCRICKGTGWIEILGSGMVHPRVLEMGGYDSKELTGFAFGMGVERIAMLKYGIEDMRLLFDNDLRFLQQF.

Residue E255 participates in Mg(2+) binding.

Belongs to the class-II aminoacyl-tRNA synthetase family. Phe-tRNA synthetase alpha subunit type 1 subfamily. Tetramer of two alpha and two beta subunits. Mg(2+) serves as cofactor.

It localises to the cytoplasm. It carries out the reaction tRNA(Phe) + L-phenylalanine + ATP = L-phenylalanyl-tRNA(Phe) + AMP + diphosphate + H(+). The protein is Phenylalanine--tRNA ligase alpha subunit of Desulfitobacterium hafniense (strain DSM 10664 / DCB-2).